Reading from the N-terminus, the 87-residue chain is U-scoloptoxin(23)-Er1a (87 aa).

The first 29 residues, 1–29, serve as a signal peptide directing secretion; the sequence is MSLIVVRTHSFLFVLVLLLFASVFHSVDS. The segment at 32–54 is disordered; that stretch reads FNPNGRYGRRDSASALSDASENK.

The protein belongs to the scoloptoxin-23 family. As to expression, expressed by the venom gland.

It localises to the secreted. This chain is U-scoloptoxin(23)-Er1a, found in Ethmostigmus rubripes (Giant centipede).